We begin with the raw amino-acid sequence, 100 residues long: Urease subunit gamma (100 aa).

It belongs to the urease gamma subunit family. As to quaternary structure, heterotrimer of UreA (gamma), UreB (beta) and UreC (alpha) subunits. Three heterotrimers associate to form the active enzyme.

The protein resides in the cytoplasm. It carries out the reaction urea + 2 H2O + H(+) = hydrogencarbonate + 2 NH4(+). The protein operates within nitrogen metabolism; urea degradation; CO(2) and NH(3) from urea (urease route): step 1/1. The polypeptide is Urease subunit gamma (Thermosynechococcus vestitus (strain NIES-2133 / IAM M-273 / BP-1)).